The chain runs to 56 residues: U-megalopygitoxin(2)-Mo9 (56 aa).

The signal sequence occupies residues 1–25; the sequence is MKFIVLLLIVTSVLMMFAVTTEASP. Gln-26 carries the post-translational modification Pyrrolidone carboxylic acid. A Threonine amide modification is found at Thr-55.

Belongs to the caterpillar 2 family. Contains 2 disulfide bonds. In terms of tissue distribution, expressed by the venom apparatus.

The protein resides in the secreted. Its function is as follows. Probable toxin. This chain is U-megalopygitoxin(2)-Mo9, found in Megalopyge opercularis (Southern flannel moth).